The primary structure comprises 331 residues: Ribose-phosphate pyrophosphokinase (331 aa).

55–57 serves as a coordination point for ATP; it reads DGE. Mg(2+) is bound by residues H148 and D187. K211 is an active-site residue. D-ribose 5-phosphate is bound by residues R213, D237, and 241 to 245; that span reads DTGGT.

Belongs to the ribose-phosphate pyrophosphokinase family. Class I subfamily. Homohexamer. Mg(2+) serves as cofactor.

It localises to the cytoplasm. The enzyme catalyses D-ribose 5-phosphate + ATP = 5-phospho-alpha-D-ribose 1-diphosphate + AMP + H(+). It participates in metabolic intermediate biosynthesis; 5-phospho-alpha-D-ribose 1-diphosphate biosynthesis; 5-phospho-alpha-D-ribose 1-diphosphate from D-ribose 5-phosphate (route I): step 1/1. In terms of biological role, involved in the biosynthesis of the central metabolite phospho-alpha-D-ribosyl-1-pyrophosphate (PRPP) via the transfer of pyrophosphoryl group from ATP to 1-hydroxyl of ribose-5-phosphate (Rib-5-P). The chain is Ribose-phosphate pyrophosphokinase from Prochlorococcus marinus subsp. pastoris (strain CCMP1986 / NIES-2087 / MED4).